We begin with the raw amino-acid sequence, 117 residues long: Acrylate reductase cytochrome subunit (117 aa).

Positions 1 to 22 (MKMYKLMLGLVLAGLVSLSAQA) are cleaved as a signal peptide. H29, C37, C40, H41, C54, C57, H58, H79, H83, C90, C93, H94, H97, C104, C107, and H108 together coordinate heme c.

In terms of assembly, the ArdAB flavocytochrome c is composed of a FAD-containing subunit (ArdA) and a heme c-containing subunit (ArdB). Requires heme c as cofactor.

It localises to the periplasm. Methacrylate acts as a competitive inhibitor of the acrylate reductase activity and suppresses the reductase activity in dose-dependent manner. In terms of biological role, heme c-containing subunit of the ArdAB flavocytochrome c, which catalyzes the reduction of acrylate to propanoate and supports dimethylsulfoniopropionate-dependent anaerobic respiration. In vitro, can use the artificial electron donor methyl viologen. The natural electron donor is probably a low-potential cytochrome c. Also shows weak activity toward methacrylate in vitro (at a 22-fold lower rate) but cannot use other tested 2-enoates, including crotonic, fumaric, sorbic, urocanic, cinnamic, p-coumaric, caffeic or ferulic acids. The protein catalyzes a unidirectional reaction and cannot oxidize propanoate with phenazine metasulfate and dichlorophenolindophenol as electron acceptors. This is Acrylate reductase cytochrome subunit from Shewanella woodyi (strain ATCC 51908 / MS32).